Here is a 59-residue protein sequence, read N- to C-terminus: UPF0391 membrane protein Geob_0344 (59 aa).

Transmembrane regions (helical) follow at residues 4–24 (WAAI…TGIA) and 33–53 (FLFI…ITAG).

The protein belongs to the UPF0391 family.

It localises to the cell membrane. The chain is UPF0391 membrane protein Geob_0344 from Geotalea daltonii (strain DSM 22248 / JCM 15807 / FRC-32) (Geobacter daltonii).